The primary structure comprises 301 residues: Putative dynamin-related protein 4A (301 aa).

The Dynamin-type G domain occupies 59-301; that stretch reads GIQLPTIVVV…LIDGDIVGIL (243 aa). The interval 69-76 is G1 motif; the sequence is GDQSSGKS. 69–76 contacts GTP; it reads GDQSSGKS. The interval 94–96 is G2 motif; the sequence is CTR. A G3 motif region spans residues 168-171; that stretch reads DLPG. GTP contacts are provided by residues 168 to 172 and 237 to 240; these read DLPGI and TKAD. The segment at 237 to 240 is G4 motif; sequence TKAD. Residue E270 is a region of interest, G5 motif.

Belongs to the TRAFAC class dynamin-like GTPase superfamily. Dynamin/Fzo/YdjA family.

The chain is Putative dynamin-related protein 4A (DRP4A) from Arabidopsis thaliana (Mouse-ear cress).